The primary structure comprises 525 residues: Glutamyl-tRNA(Gln) amidotransferase subunit A, mitochondrial (525 aa).

Active-site charge relay system residues include lysine 76 and serine 168. The active-site Acyl-ester intermediate is the serine 192.

It belongs to the amidase family. GatA subfamily. Subunit of the heterotrimeric GatCAB amidotransferase (AdT) complex, composed of A (QRSL1), B (GATB) and C (GATC) subunits.

The protein localises to the mitochondrion. It catalyses the reaction L-glutamyl-tRNA(Gln) + L-glutamine + ATP + H2O = L-glutaminyl-tRNA(Gln) + L-glutamate + ADP + phosphate + H(+). In terms of biological role, allows the formation of correctly charged Gln-tRNA(Gln) through the transamidation of misacylated Glu-tRNA(Gln) in the mitochondria. The reaction takes place in the presence of glutamine and ATP through an activated gamma-phospho-Glu-tRNA(Gln). The polypeptide is Glutamyl-tRNA(Gln) amidotransferase subunit A, mitochondrial (Qrsl1) (Rattus norvegicus (Rat)).